The following is a 991-amino-acid chain: Polyribonucleotide nucleotidyltransferase 2, mitochondrial (991 aa).

A mitochondrion-targeting transit peptide spans 1–39 (MSSIVNRASSASLPNFLAWRALGFRTICSGRLGFAPSVP). Residues 609–667 (PRLATLKYSNDSLRTLIGPMGVLKRKIEVETGARLSIDNGTLTIVAKNQDVMEKAQEQV) form the KH domain. Residues 678–746 (GGVYKGTVSS…VRGNIKLSRK (69 aa)) enclose the S1 motif 1 domain. The segment at 813–865 (EAEKSSPVNDNDKPRRAATSKPDRKPKSTASKLIATQKEEEALESIAPEETSA) is disordered. Basic and acidic residues predominate over residues 822–838 (DNDKPRRAATSKPDRKP). The S1 motif 2 domain maps to 925-987 (GTEMTATVDH…GVPVMALVDE (63 aa)).

The protein belongs to the polyribonucleotide nucleotidyltransferase family.

The protein resides in the mitochondrion. The enzyme catalyses RNA(n+1) + phosphate = RNA(n) + a ribonucleoside 5'-diphosphate. Functionally, involved in the 3'-end maturation of mitochondrial mRNAs, rRNAs and tRNAs. Functions as a poly(A) mRNA 3'-5' degrading phosphorylase and is required for the degradation of highly expressed transcripts of non-coding regions. This Arabidopsis thaliana (Mouse-ear cress) protein is Polyribonucleotide nucleotidyltransferase 2, mitochondrial (PNP2).